A 356-amino-acid chain; its full sequence is S-adenosylmethionine:tRNA ribosyltransferase-isomerase (356 aa).

The protein belongs to the QueA family. As to quaternary structure, monomer.

The protein localises to the cytoplasm. The catalysed reaction is 7-aminomethyl-7-carbaguanosine(34) in tRNA + S-adenosyl-L-methionine = epoxyqueuosine(34) in tRNA + adenine + L-methionine + 2 H(+). It participates in tRNA modification; tRNA-queuosine biosynthesis. Its function is as follows. Transfers and isomerizes the ribose moiety from AdoMet to the 7-aminomethyl group of 7-deazaguanine (preQ1-tRNA) to give epoxyqueuosine (oQ-tRNA). The sequence is that of S-adenosylmethionine:tRNA ribosyltransferase-isomerase from Yersinia pseudotuberculosis serotype IB (strain PB1/+).